Consider the following 472-residue polypeptide: Carboxypeptidase Q (472 aa).

The first 20 residues, 1-20 (MKFLIFAFFGGVHLLSLCSG), serve as a signal peptide directing secretion. Residues 21–44 (KAIYKNGISKRTFEEIKEEIASYG) constitute a propeptide that is removed on maturation. Asn61 and Asn179 each carry an N-linked (GlcNAc...) asparagine glycan. Zn(2+) contacts are provided by His290 and Asp302. Catalysis depends on Glu336, which acts as the Nucleophile. Glu337 contacts Zn(2+). Asn353 and Asn356 each carry an N-linked (GlcNAc...) asparagine glycan. Zn(2+) is bound at residue Asp364. N-linked (GlcNAc...) asparagine glycosylation is present at Asn396. His434 contacts Zn(2+).

It belongs to the peptidase M28 family. As to quaternary structure, homodimer. The monomeric form is inactive while the homodimer is active. Post-translationally, N-glycosylated. The secreted form is modified by hybrid or complex type oligosaccharide chains.

It localises to the endoplasmic reticulum. It is found in the golgi apparatus. Its subcellular location is the lysosome. The protein resides in the secreted. Functionally, carboxypeptidase that may play an important role in the hydrolysis of circulating peptides. Catalyzes the hydrolysis of dipeptides with unsubstituted terminals into amino acids. May play a role in the liberation of thyroxine hormone from its thyroglobulin (Tg) precursor. The chain is Carboxypeptidase Q (CPQ) from Pongo abelii (Sumatran orangutan).